The primary structure comprises 175 residues: Lipoprotein signal peptidase (175 aa).

4 helical membrane-spanning segments follow: residues L25 to V45, V56 to A76, W81 to L101, and F110 to V130. Active-site residues include D136 and D154. The helical transmembrane segment at H146–V166 threads the bilayer.

This sequence belongs to the peptidase A8 family.

It localises to the cell inner membrane. The catalysed reaction is Release of signal peptides from bacterial membrane prolipoproteins. Hydrolyzes -Xaa-Yaa-Zaa-|-(S,diacylglyceryl)Cys-, in which Xaa is hydrophobic (preferably Leu), and Yaa (Ala or Ser) and Zaa (Gly or Ala) have small, neutral side chains.. The protein operates within protein modification; lipoprotein biosynthesis (signal peptide cleavage). Its function is as follows. This protein specifically catalyzes the removal of signal peptides from prolipoproteins. This chain is Lipoprotein signal peptidase, found in Cupriavidus necator (strain ATCC 17699 / DSM 428 / KCTC 22496 / NCIMB 10442 / H16 / Stanier 337) (Ralstonia eutropha).